Reading from the N-terminus, the 413-residue chain is Mitochondrial carrier protein MTM1 (413 aa).

3 Solcar repeats span residues 59–193 (IGFT…FRNR), 205–305 (MTFC…IKKR), and 318–406 (GVFG…VKYV). 6 consecutive transmembrane segments (helical) span residues 65-85 (VFSA…LDVV), 170-190 (NAGL…YDMF), 204-226 (AMTF…TVCY), 284-304 (QLAR…PIKK), 316-336 (LVGV…IAAA), and 378-399 (LFMG…VVSF).

The protein belongs to the mitochondrial carrier (TC 2.A.29) family. Ubiquitous.

The protein localises to the mitochondrion inner membrane. Functionally, involved in the mitochondrial activation of MSD1 by specifically facilitating insertion of the essential manganese cofactor. Has the ability to activate iron regulon in an iron-dependent manner. This Arabidopsis thaliana (Mouse-ear cress) protein is Mitochondrial carrier protein MTM1 (MTM1).